A 507-amino-acid chain; its full sequence is Microcystinase C (507 aa).

The first 21 residues, 1-21 (MLDRRTLMGGILSMAGSKATG), serve as a signal peptide directing secretion. The Zn(2+) site is built by Asp-167, His-169, and His-191.

Belongs to the peptidase M81 family. Zn(2+) is required as a cofactor.

With respect to regulation, inhibited by the metal chelators EDTA and 1,10-phenanthroline. Involved in peptidolytic degradation of cyclic heptapeptide hepatotoxin microcystin (MC). Cleaves both linear MC and the tetrapeptide degradation product of MC. Cleaves the Adda-Glu peptide bond of linear MC heptapeptides. This Sphingomonas sp protein is Microcystinase C.